Here is a 507-residue protein sequence, read N- to C-terminus: MITLTPGHLTLPQLRKIAREPVQLTLDPASFAKIDAGAKAVADIAAKGEPAYGINTGFGRLASTHIPHDQLELLQKNLVLSHAVGVGEPMARSSVRLLMALKLSSLGRGHSGIRREVMDALITLFNADVLPLIPVKGSVGASGDLAPLAHMSAVLLGVGEVFIRGERASALDGLRVAGLAPLTLQAKEGLALLNGTQASTALALDNMFSIEDLYRTALVAGALSVDAAAGSVKPFDARIHELRGHRGQIEAAAAYRDLLDGSPINQSHRDCDKVQDPYSLRCQPQVMGACLDQMRHAADVLLIEANAVSDNPLIFPDTGEVLSGGNFHAEPVAFAADNLALAAAEIGALAERRIALLIDATLSGLPPFLVKDGGVNSGFMIAHVTAAALASENKTLAHPASVDSLPTSANQEDHVSMATFAARKLADIADNTKYILAIELLAAAQGVDLRAPYHTSPKLAPVMETIRSHVAHYELDHYFAPDIAVIAKLVGERAFAKAAPFSFASEQ.

Residues 141-143 (ASG) constitute a cross-link (5-imidazolinone (Ala-Gly)). S142 carries the post-translational modification 2,3-didehydroalanine (Ser).

Belongs to the PAL/histidase family. In terms of processing, contains an active site 4-methylidene-imidazol-5-one (MIO), which is formed autocatalytically by cyclization and dehydration of residues Ala-Ser-Gly.

The protein resides in the cytoplasm. It carries out the reaction L-histidine = trans-urocanate + NH4(+). It participates in amino-acid degradation; L-histidine degradation into L-glutamate; N-formimidoyl-L-glutamate from L-histidine: step 1/3. In Burkholderia ambifaria (strain MC40-6), this protein is Histidine ammonia-lyase.